A 305-amino-acid chain; its full sequence is Phosphoinositol dihydroceramide synthase (305 aa).

The signal sequence occupies residues 1 to 23 (MPSKKETLTVIVIMALFLLLTAA). C24 carries the N-palmitoyl cysteine lipid modification. The S-diacylglycerol cysteine moiety is linked to residue C24. The next 6 helical transmembrane spans lie at 41–61 (LFFA…FAIF), 117–137 (VFAG…GLCL), 149–169 (FALV…IHPA), 216–236 (FAAV…YAII), 241–261 (WYVI…AIYS), and 266–286 (IIDV…FEYG).

The protein resides in the membrane. The enzyme catalyses N-(2-hydroxy-fatty acyl)-dihydroceramide + a 1,2-diacyl-sn-glycero-3-phospho-(1D-myo-inositol) = inositol-1-phospho-N-(2-hydroxy-fatty acyl)-dihydroceramide + a 1,2-diacyl-sn-glycerol. Functionally, catalyzes the addition of a phosphorylinositol group onto dihydroceramide to form phosphoinositol dihydroceramide (PI-DHC), an essential step in sphingolipid biosynthesis. The sequence is that of Phosphoinositol dihydroceramide synthase from Bacteroides thetaiotaomicron (strain ATCC 29148 / DSM 2079 / JCM 5827 / CCUG 10774 / NCTC 10582 / VPI-5482 / E50).